The chain runs to 398 residues: Cysteine protease ATG4A (398 aa).

C77 serves as the catalytic Nucleophile. Residues D279 and H281 contribute to the active site. Residues 393 to 396 (FEIL) carry the LIR motif.

It belongs to the peptidase C54 family. In terms of assembly, interacts with ATG9A; the interaction is direct.

Its subcellular location is the cytoplasm. The enzyme catalyses [protein]-C-terminal L-amino acid-glycyl-phosphatidylethanolamide + H2O = [protein]-C-terminal L-amino acid-glycine + a 1,2-diacyl-sn-glycero-3-phosphoethanolamine. Its activity is regulated as follows. Inhibited by N-ethylmaleimide. Redox-regulated during autophagy since reducing conditions activate ATG4A whereas an oxidizing environment such as the presence of H(2)O(2) inhibits its activity. Functionally, cysteine protease that plays a key role in autophagy by mediating both proteolytic activation and delipidation of ATG8 family proteins. The protease activity is required for proteolytic activation of ATG8 family proteins: cleaves the C-terminal amino acid of ATG8 proteins to reveal a C-terminal glycine. Exposure of the glycine at the C-terminus is essential for ATG8 proteins conjugation to phosphatidylethanolamine (PE) and insertion to membranes, which is necessary for autophagy. Preferred substrate is GABARAPL2 followed by MAP1LC3A and GABARAP. Protease activity is also required to counteract formation of high-molecular weight conjugates of ATG8 proteins (ATG8ylation): acts as a deubiquitinating-like enzyme that removes ATG8 conjugated to other proteins, such as ATG3. In addition to the protease activity, also mediates delipidation of ATG8 family proteins. Catalyzes delipidation of PE-conjugated forms of ATG8 proteins during macroautophagy. Compared to ATG4B, the major protein for proteolytic activation of ATG8 proteins, shows weaker ability to cleave the C-terminal amino acid of ATG8 proteins, while it displays stronger delipidation activity. Involved in phagophore growth during mitophagy independently of its protease activity and of ATG8 proteins: acts by regulating ATG9A trafficking to mitochondria and promoting phagophore-endoplasmic reticulum contacts during the lipid transfer phase of mitophagy. The sequence is that of Cysteine protease ATG4A from Pongo abelii (Sumatran orangutan).